Here is a 394-residue protein sequence, read N- to C-terminus: Elongation factor Tu (394 aa).

The tr-type G domain occupies 10 to 204; that stretch reads KPHINVGTIG…HLDNYIPEPK (195 aa). The segment at 19–26 is G1; that stretch reads GHVDHGKT. 19 to 26 contributes to the GTP binding site; it reads GHVDHGKT. Thr-26 is a binding site for Mg(2+). Residues 60–64 are G2; the sequence is GITIN. The tract at residues 81–84 is G3; the sequence is DCPG. Residues 81 to 85 and 136 to 139 contribute to the GTP site; these read DCPGH and NKCD. Positions 136–139 are G4; sequence NKCD. Residues 174-176 form a G5 region; that stretch reads SAL.

Belongs to the TRAFAC class translation factor GTPase superfamily. Classic translation factor GTPase family. EF-Tu/EF-1A subfamily. Monomer.

The protein localises to the cytoplasm. The catalysed reaction is GTP + H2O = GDP + phosphate + H(+). Functionally, GTP hydrolase that promotes the GTP-dependent binding of aminoacyl-tRNA to the A-site of ribosomes during protein biosynthesis. The sequence is that of Elongation factor Tu from Wigglesworthia glossinidia brevipalpis.